A 1148-amino-acid polypeptide reads, in one-letter code: MDIRKFFGVIPSGKKLVSETVKKNEKTKSDEETLKAKKGIKEIKVNSSRKEDDFKQKQPSKKKRIIYDSDSESEETLQVKNAKKPPEKLPVSSKPGKISRQDPVTYISETDEEDDFMCKKAASKSKENGRSTNSHLGTSNMKKNEENTKTKNKPLSPIKLTPTSVLDYFGTGSVQRSNKKMVASKRKELSQNTDESGLNDEAIAKQLQLDEDAELERQLHEDEEFARTLAMLDEEPKTKKARKDTEAGETFSSVQANLSKAEKHKYPHKVKTAQVSDERKSYSPRKQSKYESSKESQQHSKSSADKIGEVSSPKASSKLAIMKRKEESSYKEIEPVASKRKENAIKLKGETKTPKKTKSSPAKKESVSPEDSEKKRTNYQAYRSYLNREGPKALGSKEIPKGAENCLEGLIFVITGVLESIERDEAKSLIERYGGKVTGNVSKKTNYLVMGRDSGQSKSDKAAALGTKIIDEDGLLNLIRTMPGKKSKYEIAVETEMKKESKLERTPQKNVQGKRKISPSKKESESKKSRPTSKRDSLAKTIKKETDVFWKSLDFKEQVAEETSGDSKARNLADDSSENKVENLLWVDKYKPTSLKTIIGQQGDQSCANKLLRWLRNWQKSSSEDKKHAAKFGKFSGKDDGSSFKAALLSGPPGVGKTTTASLVCQELGYSYVELNASDTRSKSSLKAIVAESLNNTSIKGFYSNGAASSVSTKHALIMDEVDGMAGNEDRGGIQELIGLIKHTKIPIICMCNDRNHPKIRSLVHYCFDLRFQRPRVEQIKGAMMSIAFKEGLKIPPPAMNEIILGANQDIRQVLHNLSMWCARSKALTYDQAKADSHRAKKDIKMGPFDVARKVFAAGEETAHMSLVDKSDLFFHDYSIAPLFVQENYIHVKPVAAGGDMKKHLMLLSRAADSICDGDLVDSQIRSKQNWSLLPAQAIYASVLPGELMRGYMTQFPTFPSWLGKHSSTGKHDRIVQDLALHMSLRTYSSKRTVNMDYLSLLRDALVQPLTSQGVDGVQDVVALMDTYYLMKEDFENIMEISSWGGKPSPFSKLDPKVKAAFTRAYNKEAHLTPYSLQAIKASRHSTSPSLDSEYNEELNEDDSQSDEKDQDAIETDAMIKKKTKSSKPSKPEKDKEPRKGKGKSSKK.

The segment covering 46-56 (NSSRKEDDFKQ) has biased composition (basic and acidic residues). Disordered regions lie at residues 46–201 (NSSR…LNDE) and 228–380 (TLAM…TNYQ). A Glycyl lysine isopeptide (Lys-Gly) (interchain with G-Cter in SUMO2) cross-link involves residue K50. Y67 is modified (phosphotyrosine). S69, S71, S73, and S108 each carry phosphoserine. Position 110 is a phosphothreonine (T110). The segment covering 130-141 (RSTNSHLGTSNM) has biased composition (polar residues). Phosphoserine is present on S156. Phosphothreonine is present on residues T161 and T163. A phosphoserine mark is found at S164, S173, and S190. Over residues 234–246 (EEPKTKKARKDTE) the composition is skewed to basic and acidic residues. A Phosphoserine modification is found at S253. Basic residues predominate over residues 262–271 (EKHKYPHKVK). 2 positions are modified to phosphoserine: S281 and S283. Positions 288-308 (SKYESSKESQQHSKSSADKIG) are enriched in basic and acidic residues. S312 is modified (phosphoserine). Basic and acidic residues-rich tracts occupy residues 323–353 (KRKE…ETKT) and 362–376 (AKKE…EKKR). S368 carries the post-translational modification Phosphoserine. Positions 402–492 (GAENCLEGLI…PGKKSKYEIA (91 aa)) constitute a BRCT domain. Composition is skewed to basic and acidic residues over residues 496–507 (EMKKESKLERTP) and 520–538 (SKKE…RDSL). Positions 496–538 (EMKKESKLERTPQKNVQGKRKISPSKKESESKKSRPTSKRDSL) are disordered. Phosphoserine is present on S537. Residue 650–657 (SGPPGVGK) coordinates ATP. The disordered stretch occupies residues 1081-1148 (KASRHSTSPS…RKGKGKSSKK (68 aa)). The span at 1094–1105 (EYNEELNEDDSQ) shows a compositional bias: acidic residues. Phosphoserine occurs at positions 1104 and 1106. The short motif at 1120–1124 (IKKKT) is the Nuclear localization signal element. The span at 1130–1140 (SKPEKDKEPRK) shows a compositional bias: basic and acidic residues.

It belongs to the activator 1 large subunit family. As to quaternary structure, large subunit of the RFC complex, an heteropentameric complex consisting of RFC1 and four small subunits RFC2, RFC3, RFC4 and RFC5; the RFC complex interacts with PCNA and the interaction involves RFC1. Wide tissue distribution. Undetectable in placental tissue.

The protein localises to the nucleus. In terms of biological role, subunit of the replication factor C (RFC) complex which acts during elongation of primed DNA templates by DNA polymerases delta and epsilon, and is necessary for ATP-dependent loading of proliferating cell nuclear antigen (PCNA) onto primed DNA. This subunit binds to the primer-template junction. Binds the PO-B transcription element as well as other GA rich DNA sequences. Can bind single- or double-stranded DNA. This Homo sapiens (Human) protein is Replication factor C subunit 1 (RFC1).